The following is a 458-amino-acid chain: MADSTETNADTLRRELQKVLTEILNDGGGNDRDETEAFSGVVKAIDEAVRILTCLRKVESKIPESDISPVEVPKEFICTLSNTIMIEPVIIASGQTYEKRYITEWLKHERTCPKTKQVLSHRLWIPNHLISDLITQWCLVNKYDHQKPSDELVAELFTSDIEALLQRVSSSSSVADQIEAAKELRHQTKKFPNVRVFFVAGIHDSITRLLSPLSTLDEAVDSSLELQENIVTALFNLSILESNKTVIAENCLVIPLLTKSLKQGTDETRRNAAATLSSLSAIDSNKIIIGNSEAVKALIDLIEEGDLLATKEATSTVFNLCIVLENKGKVVSAGLIHAATKKIKAGSNVDELLSLLALISTHNRAVEEMDKLGFIYDLFSILRKPSSLLTGENAVVIVFNMYDRNRDRSRLKVVGEEENQHGTFTKLAKQGSVRAARKAQGILQWIKRFVTGKEPQRA.

A U-box domain is found at 71–144 (EVPKEFICTL…TQWCLVNKYD (74 aa)). ARM repeat units follow at residues 241 to 281 (ESNK…SLSA) and 283 to 322 (DSNK…NLCI).

The catalysed reaction is S-ubiquitinyl-[E2 ubiquitin-conjugating enzyme]-L-cysteine + [acceptor protein]-L-lysine = [E2 ubiquitin-conjugating enzyme]-L-cysteine + N(6)-ubiquitinyl-[acceptor protein]-L-lysine.. Its pathway is protein modification; protein ubiquitination. Its function is as follows. Functions as an E3 ubiquitin ligase. The polypeptide is Putative U-box domain-containing protein 46 (PUB46) (Arabidopsis thaliana (Mouse-ear cress)).